The sequence spans 396 residues: Acetate kinase (396 aa).

Residue asparagine 8 coordinates Mg(2+). Lysine 15 contributes to the ATP binding site. Arginine 89 is a substrate binding site. The Proton donor/acceptor role is filled by aspartate 146. Residues 206-210, 283-285, and 331-335 contribute to the ATP site; these read HIGNG, DMR, and GVGEN. Glutamate 383 is a binding site for Mg(2+).

Belongs to the acetokinase family. As to quaternary structure, homodimer. Mg(2+) is required as a cofactor. It depends on Mn(2+) as a cofactor.

The protein resides in the cytoplasm. It catalyses the reaction acetate + ATP = acetyl phosphate + ADP. It participates in metabolic intermediate biosynthesis; acetyl-CoA biosynthesis; acetyl-CoA from acetate: step 1/2. Catalyzes the formation of acetyl phosphate from acetate and ATP. Can also catalyze the reverse reaction. In Streptococcus pneumoniae (strain 70585), this protein is Acetate kinase.